Reading from the N-terminus, the 229-residue chain is Large ribosomal subunit protein bL25 (229 aa).

Disordered stretches follow at residues 1 to 21 and 187 to 229; these read MSDALTLPAEARERAGKGASR and PSAL…KGDD. Acidic residues predominate over residues 196-207; it reads SEEEEDGEEVDA.

This sequence belongs to the bacterial ribosomal protein bL25 family. CTC subfamily. As to quaternary structure, part of the 50S ribosomal subunit; part of the 5S rRNA/L5/L18/L25 subcomplex. Contacts the 5S rRNA. Binds to the 5S rRNA independently of L5 and L18.

Functionally, this is one of the proteins that binds to the 5S RNA in the ribosome where it forms part of the central protuberance. The polypeptide is Large ribosomal subunit protein bL25 (Erythrobacter litoralis (strain HTCC2594)).